Consider the following 291-residue polypeptide: Protein pxr1 (291 aa).

The segment covering 1–11 has biased composition (basic residues); it reads MGLAAPRKRTK. 2 disordered regions span residues 1–26 and 146–268; these read MGLA…RSTD and LVPP…FRGR. Composition is skewed to polar residues over residues 15–25 and 146–156; these read DPNNTTWSRST and LVPPTSQNGQA. Residues 25–79 enclose the G-patch domain; sequence TDGFGHRILKAQGWTPGSFLGPRNAAHSDLFTTASASHIRVVLKDDNLGLGARPK. A compositionally biased stretch (basic and acidic residues) spans 194–205; sequence ETNSRGSREKER. Positions 206-219 are enriched in basic residues; that stretch reads KREKRQMRRDKKRK. The segment covering 230–247 has biased composition (basic and acidic residues); that stretch reads MQEKTRVQGPSEDVKPTE.

Belongs to the PINX1 family.

It is found in the nucleus. Its subcellular location is the nucleolus. Its function is as follows. Involved in rRNA-processing at A0, A1 and A2 sites and negatively regulates telomerase. The sequence is that of Protein pxr1 (pxr1) from Aspergillus clavatus (strain ATCC 1007 / CBS 513.65 / DSM 816 / NCTC 3887 / NRRL 1 / QM 1276 / 107).